The following is a 104-amino-acid chain: Iron-sulfur cluster assembly protein CyaY (104 aa).

The protein belongs to the frataxin family.

Its function is as follows. Involved in iron-sulfur (Fe-S) cluster assembly. May act as a regulator of Fe-S biogenesis. This chain is Iron-sulfur cluster assembly protein CyaY, found in Aliivibrio fischeri (strain ATCC 700601 / ES114) (Vibrio fischeri).